The following is a 325-amino-acid chain: Heat-inducible transcription repressor HrcA (325 aa).

This sequence belongs to the HrcA family.

Negative regulator of class I heat shock genes (grpE-dnaK-dnaJ and groELS operons). Prevents heat-shock induction of these operons. The polypeptide is Heat-inducible transcription repressor HrcA (Staphylococcus aureus (strain bovine RF122 / ET3-1)).